The primary structure comprises 91 residues: Potassium channel toxin TstKMK (91 aa).

An N-terminal signal peptide occupies residues 1-25 (MVATNRCCVFALLFALLLVHSLTEA). The propeptide occupies 26–42 (GKGKEILGKIKEKIIEA). One can recognise a BetaSPN-type CS-alpha/beta domain in the interval 58–91 (EYACPAIDKFCEDHCAAKKAVGKCDDFKCKCIKL). 3 disulfides stabilise this stretch: C61/C81, C68/C86, and C72/C88.

Belongs to the long chain scorpion toxin family. Class 2 subfamily. In terms of tissue distribution, expressed by the venom gland.

The protein resides in the secreted. In terms of biological role, the full peptide presents antibacterial and cytotoxic activities. The synthetic C-terminus (AA 33-76) inhibits voltage-gated potassium channels Kv1.1/KCNA1, Kv1.2/KCNA2, and Kv1.3/KCNA3. This Tityus stigmurus (Brazilian scorpion) protein is Potassium channel toxin TstKMK.